A 129-amino-acid polypeptide reads, in one-letter code: M-zodatoxin-Lt8a (129 aa).

Positions M1–S20 are cleaved as a signal peptide. Positions K21–R60 are excised as a propeptide. The Processing quadruplet motif signature appears at E57–R60.

This sequence belongs to the cationic peptide 06 (cytoinsectotoxin) family. Post-translationally, cleavage of the propeptide depends on the processing quadruplet motif (XXXR, with at least one of X being E). In terms of tissue distribution, expressed by the venom gland.

It is found in the secreted. In terms of biological role, insecticidal, cytolytic and antimicrobial peptide. Has insecticidal activity against the flesh fly S.carnaria, and against the cockroach N.cinerea. Has insecticidal activity against D.melanogaster. Has hemolytic activity against human erythrocytes (EC(50)=6 uM). Has cytolytic activity against insect Sf9 cells (EC(50)=1 uM) and human leukocytes (EC(50)=3 uM). Has antibacterial activity against the Gram-positive bacteria A.globiformis VKM Ac-1112 (MIC=0.5 uM), and B.subtilis VKM B-501 (MIC=0.6-0.9 uM), and against the Gram-negative bacteria E.coli C600 (MIC=0.5 uM), E.coli DH5alpha (MIC=0.9 uM), E.coli MH1 (MIC=0.5 uM), P.aeruginosa PAO1 (MIC=1.9 uM), and P.fluorescens VKM B-894 (MIC=3.8 uM). Lacks antimicrobial activity against the Gram-positive bacteria M.luteus and S.aureus, and against the Gram-negative bacterium S.marcescens. Forms voltage-dependent, ion-permeable channels in membranes. At high concentration causes cell membrane lysis. The polypeptide is M-zodatoxin-Lt8a (cit 1-1) (Lachesana tarabaevi (Spider)).